The sequence spans 249 residues: tRNA pseudouridine synthase A (249 aa).

Residue D53 is the Nucleophile of the active site. Y111 contributes to the substrate binding site.

This sequence belongs to the tRNA pseudouridine synthase TruA family. In terms of assembly, homodimer.

The enzyme catalyses uridine(38/39/40) in tRNA = pseudouridine(38/39/40) in tRNA. Functionally, formation of pseudouridine at positions 38, 39 and 40 in the anticodon stem and loop of transfer RNAs. The polypeptide is tRNA pseudouridine synthase A (Streptococcus mutans serotype c (strain ATCC 700610 / UA159)).